A 626-amino-acid chain; its full sequence is Lysine--tRNA ligase, cytoplasmic (626 aa).

An N-acetylmethionine modification is found at M1. Composition is skewed to polar residues over residues 1-11 and 18-27; these read MEGAADQTTKA and DSSTTLNAAE. The tract at residues 1-84 is disordered; that stretch reads MEGAADQTTK…QKAVAADDEE (84 aa). Residues 37-69 are a coiled coil; it reads RSKNALKKEQKMKQKEEEKRRKDEEKAEKAKQA. A compositionally biased stretch (basic and acidic residues) spans 42–67; it reads LKKEQKMKQKEEEKRRKDEEKAEKAK. A compositionally biased stretch (low complexity) spans 69-78; it reads APKASSQKAV. A DNA-binding region (OB) is located at residues 141-217; it reads SLAGRIMSKR…RGELSIFPRS (77 aa). 2 residues coordinate substrate: G313 and E337. ATP-binding positions include 359–361 and 367–368; these read RNE and HN. 2 residues coordinate substrate: E375 and Y377. The Ca(2+) site is built by E521 and E528. 528–529 contacts ATP; the sequence is EL. Substrate-binding residues include N531 and E535. ATP is bound at residue 584–587; the sequence is GIDR.

Belongs to the class-II aminoacyl-tRNA synthetase family. Ca(2+) is required as a cofactor.

Its subcellular location is the cytoplasm. The protein resides in the cytosol. The catalysed reaction is tRNA(Lys) + L-lysine + ATP = L-lysyl-tRNA(Lys) + AMP + diphosphate. Catalyzes the specific attachment of an amino acid to its cognate tRNA in a 2 step reaction: the amino acid (AA) is first activated by ATP to form AA-AMP and then transferred to the acceptor end of the tRNA. Promotes aminoacylation of non-cognate tRNAs and translational recoding of lysine at nonsense codons. The protein is Lysine--tRNA ligase, cytoplasmic of Arabidopsis thaliana (Mouse-ear cress).